The primary structure comprises 503 residues: Major facilitator superfamily domain-containing protein 4A (503 aa).

12 helical membrane passes run 19–39 (LTYWSVFFSFGLCIAFLGPTL), 53–73 (ITWVFFAQQFCLLVGSTLGGV), 82–102 (LFLLFLSSLTISVVFVIIPFC), 105–125 (VGVLALVMAIAGLAMGCIDTI), 139–159 (AIFLQVLHFFVGFGALLSPLI), 214–234 (YAFWIMAAINLPVPVAVFYLI), 289–309 (IWNAPFTFFAIHMCAAVTLFM), 338–358 (GYLPSLFWAFITLGRLISIPV), 366–386 (SMLFINLIGVTATFLFLLLSQ), 392–412 (MFVGTALLGLWLSSVFPSMLA), 427–447 (VLVTGAGMGEMVLQILVGSVM), and 455–475 (FLVCGICLSSLAFTLYAVLLV). A disordered region spans residues 484 to 503 (SEDSACKPPGLDGEATSYQS).

It belongs to the major facilitator superfamily.

The protein resides in the membrane. The protein is Major facilitator superfamily domain-containing protein 4A (mfsd4a) of Xenopus tropicalis (Western clawed frog).